A 459-amino-acid chain; its full sequence is Vanillin aminotransferase (459 aa).

Pyridoxal 5'-phosphate is bound by residues 115 to 116 and D255; that span reads GS. K284 carries the N6-(pyridoxal phosphate)lysine modification. Residue 320-321 coordinates pyridoxal 5'-phosphate; the sequence is FT. Residues 430–457 are a coiled coil; sequence LEELDELIRIYGKALKDTEKRVEELKSQ.

This sequence belongs to the class-III pyridoxal-phosphate-dependent aminotransferase family. In terms of tissue distribution, confined to the placenta of green fruits at high levels. Barely detectable in the pericarp and seeds as well as in the placenta of mature fruits.

The enzyme catalyses vanillin + L-alanine = vanillylamine + pyruvate. It participates in aromatic compound metabolism; phenylpropanoid biosynthesis. Functionally, involved in the biosynthesis of capsaicinoids natural products, pungent alkaloids synthesized from phenylpropanoid intermediates in the placental tissue of chili pepper fruit acting as repellant on herbivorous mammals and conferring spiciness to hot peppers. Can transfer an amine from vanillylamine to pyruvate forming vanillin and L-alanine. The sequence is that of Vanillin aminotransferase from Capsicum annuum (Capsicum pepper).